Reading from the N-terminus, the 202-residue chain is Probable molybdenum cofactor guanylyltransferase (202 aa).

GTP contacts are provided by residues 13-15 (LAG), Lys-25, Asp-71, and Asp-103. Asp-103 is a Mg(2+) binding site.

Belongs to the MobA family. Mg(2+) is required as a cofactor.

The protein resides in the cytoplasm. It carries out the reaction Mo-molybdopterin + GTP + H(+) = Mo-molybdopterin guanine dinucleotide + diphosphate. Functionally, transfers a GMP moiety from GTP to Mo-molybdopterin (Mo-MPT) cofactor (Moco or molybdenum cofactor) to form Mo-molybdopterin guanine dinucleotide (Mo-MGD) cofactor. The sequence is that of Probable molybdenum cofactor guanylyltransferase from Opitutus terrae (strain DSM 11246 / JCM 15787 / PB90-1).